The primary structure comprises 188 residues: Elongation factor P (188 aa).

Belongs to the elongation factor P family.

Its subcellular location is the cytoplasm. The protein operates within protein biosynthesis; polypeptide chain elongation. In terms of biological role, involved in peptide bond synthesis. Stimulates efficient translation and peptide-bond synthesis on native or reconstituted 70S ribosomes in vitro. Probably functions indirectly by altering the affinity of the ribosome for aminoacyl-tRNA, thus increasing their reactivity as acceptors for peptidyl transferase. The protein is Elongation factor P of Nitrobacter hamburgensis (strain DSM 10229 / NCIMB 13809 / X14).